A 589-amino-acid chain; its full sequence is Cell fusion protein aff-1 (589 aa).

The signal sequence occupies residues 1–20; sequence MRLWQWSIAVAICLVMVTEA. Residues 21–537 lie on the Extracellular side of the membrane; the sequence is RLRRHHRKRR…MAHGGDFTEW (517 aa). 7 N-linked (GlcNAc...) asparagine glycosylation sites follow: Asn58, Asn138, Asn205, Asn335, Asn382, Asn392, and Asn408. The helical transmembrane segment at 538–558 threads the bilayer; that stretch reads LKIGIHIVIAVGLLLLLILLF. Over 559–589 the chain is Cytoplasmic; that stretch reads TKCLVPLACCSLSIPFKNRNKKKKKKNSSDY.

The protein belongs to the EFF/AFF cell fusogen family. Expressed in amphid sheath cells.

It localises to the cell membrane. Its subcellular location is the apical cell membrane. In terms of biological role, required for cell fusion events during development including the fusion of anchor cells (AC), vulval A and vulval D rings, and late epidermal seam cells. Required for amphid sheath cell fusion induced by entry into dauer stage. This Caenorhabditis elegans protein is Cell fusion protein aff-1.